We begin with the raw amino-acid sequence, 353 residues long: Photosystem II D2 protein (353 aa).

Position 2 is an N-acetylthreonine (T2). A Phosphothreonine modification is found at T2. A helical membrane pass occupies residues 41-61 (CAYFALGGWFTGTTFVTSWYT). Position 118 (H118) interacts with chlorophyll a. The helical transmembrane segment at 125–141 (GFMLRQFELARSVQLRP) threads the bilayer. Pheophytin a contacts are provided by Q130 and N143. Residues 153–166 (VFVSVFLIYPLGQS) traverse the membrane as a helical segment. H198 contributes to the chlorophyll a binding site. The helical transmembrane segment at 208-228 (AALLCAIHGATVENTLFEDGD) threads the bilayer. Residues H215 and F262 each coordinate a plastoquinone. Residue H215 participates in Fe cation binding. Fe cation is bound at residue H269. The chain crosses the membrane as a helical span at residues 279–295 (GLWMSAIGVVGLALNLR).

Belongs to the reaction center PufL/M/PsbA/D family. PSII is composed of 1 copy each of membrane proteins PsbA, PsbB, PsbC, PsbD, PsbE, PsbF, PsbH, PsbI, PsbJ, PsbK, PsbL, PsbM, PsbT, PsbX, PsbY, PsbZ, Psb30/Ycf12, at least 3 peripheral proteins of the oxygen-evolving complex and a large number of cofactors. It forms dimeric complexes. The D1/D2 heterodimer binds P680, chlorophylls that are the primary electron donor of PSII, and subsequent electron acceptors. It shares a non-heme iron and each subunit binds pheophytin, quinone, additional chlorophylls, carotenoids and lipids. There is also a Cl(-1) ion associated with D1 and D2, which is required for oxygen evolution. The PSII complex binds additional chlorophylls, carotenoids and specific lipids. serves as cofactor.

The protein localises to the plastid. Its subcellular location is the chloroplast thylakoid membrane. It carries out the reaction 2 a plastoquinone + 4 hnu + 2 H2O = 2 a plastoquinol + O2. Photosystem II (PSII) is a light-driven water:plastoquinone oxidoreductase that uses light energy to abstract electrons from H(2)O, generating O(2) and a proton gradient subsequently used for ATP formation. It consists of a core antenna complex that captures photons, and an electron transfer chain that converts photonic excitation into a charge separation. The D1/D2 (PsbA/PsbD) reaction center heterodimer binds P680, the primary electron donor of PSII as well as several subsequent electron acceptors. D2 is needed for assembly of a stable PSII complex. The sequence is that of Photosystem II D2 protein from Saccharum hybrid (Sugarcane).